The chain runs to 525 residues: Glutamate--cysteine ligase (525 aa).

Belongs to the glutamate--cysteine ligase type 1 family. Type 1 subfamily.

It carries out the reaction L-cysteine + L-glutamate + ATP = gamma-L-glutamyl-L-cysteine + ADP + phosphate + H(+). The protein operates within sulfur metabolism; glutathione biosynthesis; glutathione from L-cysteine and L-glutamate: step 1/2. This is Glutamate--cysteine ligase from Vibrio vulnificus (strain CMCP6).